A 286-amino-acid polypeptide reads, in one-letter code: Beta-lactamase Ohio-1 (286 aa).

Positions 1 to 21 (MRYFRLCIISLLATLPLRVHA) are cleaved as a signal peptide. The active-site Acyl-ester intermediate is serine 66. Residues cysteine 73 and cysteine 119 are joined by a disulfide bond. Glutamate 164 serves as the catalytic Proton acceptor. 230 to 232 (KTG) provides a ligand contact to substrate.

It belongs to the class-A beta-lactamase family.

The enzyme catalyses a beta-lactam + H2O = a substituted beta-amino acid. The polypeptide is Beta-lactamase Ohio-1 (Enterobacter cloacae).